The following is a 213-amino-acid chain: Motile sperm domain-containing protein 1 (213 aa).

The 128-residue stretch at 16 to 143 (PVFVFPTELI…KEHLTESLFF (128 aa)) folds into the MSP domain. 2 consecutive transmembrane segments (helical) span residues 159 to 179 (SLLT…PTLG) and 191 to 211 (LSVN…MAIL). The Nuclear export signal motif lies at 205–208 (LITM).

It localises to the endoplasmic reticulum membrane. The protein localises to the golgi apparatus membrane. In terms of biological role, plays a role in differentiation and/or proliferation of mesenchymal stem cells. Proposed to be involved in epithelial-to-mesenchymal transition (EMT). However, another study suggests that it is not required for EMT or stem cell self-renewal and acts during later stages of differentiation. The protein is Motile sperm domain-containing protein 1 (MOSPD1) of Homo sapiens (Human).